We begin with the raw amino-acid sequence, 182 residues long: NADH-quinone oxidoreductase subunit I (182 aa).

4Fe-4S ferredoxin-type domains follow at residues 52–82 (LTRDPDGEERCVACNLCAVACPVGCISLQKA) and 92–121 (DFFRINFSRCIFCGLCEEACPTTAIQLTPD). 8 residues coordinate [4Fe-4S] cluster: C62, C65, C68, C72, C101, C104, C107, and C111.

The protein belongs to the complex I 23 kDa subunit family. In terms of assembly, NDH-1 is composed of 13 different subunits. Subunits NuoA, H, J, K, L, M, N constitute the membrane sector of the complex. Requires [4Fe-4S] cluster as cofactor.

The protein localises to the cell inner membrane. The enzyme catalyses a quinone + NADH + 5 H(+)(in) = a quinol + NAD(+) + 4 H(+)(out). In terms of biological role, NDH-1 shuttles electrons from NADH, via FMN and iron-sulfur (Fe-S) centers, to quinones in the respiratory chain. The immediate electron acceptor for the enzyme in this species is believed to be ubiquinone. Couples the redox reaction to proton translocation (for every two electrons transferred, four hydrogen ions are translocated across the cytoplasmic membrane), and thus conserves the redox energy in a proton gradient. The protein is NADH-quinone oxidoreductase subunit I of Pseudomonas syringae pv. syringae (strain B728a).